The chain runs to 204 residues: Urease accessory protein UreG (204 aa).

11 to 18 (GPVGAGKT) provides a ligand contact to GTP.

It belongs to the SIMIBI class G3E GTPase family. UreG subfamily. In terms of assembly, homodimer. UreD, UreF and UreG form a complex that acts as a GTP-hydrolysis-dependent molecular chaperone, activating the urease apoprotein by helping to assemble the nickel containing metallocenter of UreC. The UreE protein probably delivers the nickel.

It localises to the cytoplasm. Functionally, facilitates the functional incorporation of the urease nickel metallocenter. This process requires GTP hydrolysis, probably effectuated by UreG. The chain is Urease accessory protein UreG from Staphylococcus aureus (strain MSSA476).